We begin with the raw amino-acid sequence, 393 residues long: Dual-specificity RNA methyltransferase RlmN (393 aa).

Residues 1–22 (MSEQLLSELSPVAATSPSPAPA) form a disordered region. Positions 10 to 22 (SPVAATSPSPAPA) are enriched in low complexity. E114 functions as the Proton acceptor in the catalytic mechanism. Residues 120 to 358 (EDDRATLCVS…TTIVRKTRGD (239 aa)) form the Radical SAM core domain. C127 and C364 are oxidised to a cystine. Residues C134, C138, and C141 each coordinate [4Fe-4S] cluster. Residues 188 to 189 (GE), S220, 242 to 244 (SLH), and N321 contribute to the S-adenosyl-L-methionine site. The S-methylcysteine intermediate role is filled by C364.

It belongs to the radical SAM superfamily. RlmN family. The cofactor is [4Fe-4S] cluster.

Its subcellular location is the cytoplasm. It catalyses the reaction adenosine(2503) in 23S rRNA + 2 reduced [2Fe-2S]-[ferredoxin] + 2 S-adenosyl-L-methionine = 2-methyladenosine(2503) in 23S rRNA + 5'-deoxyadenosine + L-methionine + 2 oxidized [2Fe-2S]-[ferredoxin] + S-adenosyl-L-homocysteine. It carries out the reaction adenosine(37) in tRNA + 2 reduced [2Fe-2S]-[ferredoxin] + 2 S-adenosyl-L-methionine = 2-methyladenosine(37) in tRNA + 5'-deoxyadenosine + L-methionine + 2 oxidized [2Fe-2S]-[ferredoxin] + S-adenosyl-L-homocysteine. Functionally, specifically methylates position 2 of adenine 2503 in 23S rRNA and position 2 of adenine 37 in tRNAs. m2A2503 modification seems to play a crucial role in the proofreading step occurring at the peptidyl transferase center and thus would serve to optimize ribosomal fidelity. The chain is Dual-specificity RNA methyltransferase RlmN from Sodalis glossinidius (strain morsitans).